Consider the following 342-residue polypeptide: Phosphoribosylformylglycinamidine cyclo-ligase (342 aa).

This sequence belongs to the AIR synthase family.

The protein localises to the cytoplasm. It carries out the reaction 2-formamido-N(1)-(5-O-phospho-beta-D-ribosyl)acetamidine + ATP = 5-amino-1-(5-phospho-beta-D-ribosyl)imidazole + ADP + phosphate + H(+). It participates in purine metabolism; IMP biosynthesis via de novo pathway; 5-amino-1-(5-phospho-D-ribosyl)imidazole from N(2)-formyl-N(1)-(5-phospho-D-ribosyl)glycinamide: step 2/2. This chain is Phosphoribosylformylglycinamidine cyclo-ligase, found in Staphylococcus aureus (strain Mu3 / ATCC 700698).